A 117-amino-acid chain; its full sequence is Protein Wnt-6 (117 aa).

Residue Ser-1 is the site of O-palmitoleoyl serine; by PORCN attachment. An intrachain disulfide couples Cys-83 to Cys-98. N-linked (GlcNAc...) asparagine glycosylation occurs at Asn-84.

This sequence belongs to the Wnt family. Palmitoleoylation is required for efficient binding to frizzled receptors. Depalmitoleoylation leads to Wnt signaling pathway inhibition.

The protein resides in the secreted. Its subcellular location is the extracellular space. It is found in the extracellular matrix. Ligand for members of the frizzled family of seven transmembrane receptors. Probable developmental protein. May be a signaling molecule which affects the development of discrete regions of tissues. Is likely to signal over only few cell diameters. This Strongylocentrotus purpuratus (Purple sea urchin) protein is Protein Wnt-6 (WNT-6).